A 95-amino-acid chain; its full sequence is Protein RALF-like 16 (95 aa).

The signal sequence occupies residues 1–29 (MVAYEKSPIVFLFATMMLVMFLFCGSGEA). 2 disulfide bridges follow: cysteine 45-cysteine 53 and cysteine 65-cysteine 71.

The protein belongs to the plant rapid alkalinization factor (RALF) family.

The protein resides in the secreted. Cell signaling peptide that may regulate plant stress, growth, and development. Mediates a rapid alkalinization of extracellular space by mediating a transient increase in the cytoplasmic Ca(2+) concentration leading to a calcium-dependent signaling events through a cell surface receptor and a concomitant activation of some intracellular mitogen-activated protein kinases. The protein is Protein RALF-like 16 (RALFL16) of Arabidopsis thaliana (Mouse-ear cress).